An 807-amino-acid polypeptide reads, in one-letter code: Enhancer of polycomb homolog 2 (807 aa).

Glycyl lysine isopeptide (Lys-Gly) (interchain with G-Cter in SUMO2) cross-links involve residues Lys-135, Lys-195, Lys-324, and Lys-362. The disordered stretch occupies residues 376-396 (DEFPQVLSPVSEPEEENDPDG). Phosphoserine is present on Ser-538. A compositionally biased stretch (low complexity) spans 600–613 (QLQQKQQSQHSSQQ). Disordered stretches follow at residues 600-628 (QLQQ…DCMS) and 645-673 (SAPV…QPSG). Polar residues-rich tracts occupy residues 614 to 628 (THPK…DCMS) and 657 to 673 (EQNT…QPSG). Ser-754 carries the phosphoserine modification.

Belongs to the enhancer of polycomb family.

The protein localises to the nucleus. May play a role in transcription or DNA repair. The protein is Enhancer of polycomb homolog 2 (EPC2) of Homo sapiens (Human).